Here is a 149-residue protein sequence, read N- to C-terminus: Probable glycine cleavage system H protein 2 (149 aa).

The region spanning 32–114 (IAVVGITDLA…YGQGWIAKIK (83 aa)) is the Lipoyl-binding domain. The residue at position 73 (Lys73) is an N6-lipoyllysine.

The protein belongs to the GcvH family. As to quaternary structure, the glycine cleavage system is composed of four proteins: P, T, L and H. Requires (R)-lipoate as cofactor.

In terms of biological role, the glycine cleavage system catalyzes the degradation of glycine. The H protein shuttles the methylamine group of glycine from the P protein to the T protein. The polypeptide is Probable glycine cleavage system H protein 2 (Sulfolobus acidocaldarius (strain ATCC 33909 / DSM 639 / JCM 8929 / NBRC 15157 / NCIMB 11770)).